Consider the following 492-residue polypeptide: N-succinylglutamate 5-semialdehyde dehydrogenase (492 aa).

G220–G225 contributes to the NAD(+) binding site. Residues E243 and C277 contribute to the active site.

It belongs to the aldehyde dehydrogenase family. AstD subfamily.

It carries out the reaction N-succinyl-L-glutamate 5-semialdehyde + NAD(+) + H2O = N-succinyl-L-glutamate + NADH + 2 H(+). The protein operates within amino-acid degradation; L-arginine degradation via AST pathway; L-glutamate and succinate from L-arginine: step 4/5. In terms of biological role, catalyzes the NAD-dependent reduction of succinylglutamate semialdehyde into succinylglutamate. This chain is N-succinylglutamate 5-semialdehyde dehydrogenase, found in Escherichia coli O7:K1 (strain IAI39 / ExPEC).